The following is an 84-amino-acid chain: Large ribosomal subunit protein uL23 (84 aa).

The protein belongs to the universal ribosomal protein uL23 family. Part of the 50S ribosomal subunit. Contacts protein L29.

Functionally, binds to 23S rRNA. One of the proteins that surrounds the polypeptide exit tunnel on the outside of the ribosome. This is Large ribosomal subunit protein uL23 from Thermoplasma acidophilum (strain ATCC 25905 / DSM 1728 / JCM 9062 / NBRC 15155 / AMRC-C165).